Consider the following 456-residue polypeptide: Adenylosuccinate lyase (456 aa).

Residues 15–16 (RY), 90–92 (NHD), and 122–123 (TS) contribute to the N(6)-(1,2-dicarboxyethyl)-AMP site. Histidine 171 acts as the Proton donor/acceptor in catalysis. Glutamine 247 is a binding site for N(6)-(1,2-dicarboxyethyl)-AMP. The active-site Proton donor/acceptor is the serine 295. N(6)-(1,2-dicarboxyethyl)-AMP contacts are provided by residues serine 296, 301-303 (KVN), asparagine 309, arginine 335, and 340-344 (STVLR).

The protein belongs to the lyase 1 family. Adenylosuccinate lyase subfamily. In terms of assembly, homotetramer. Residues from neighboring subunits contribute catalytic and substrate-binding residues to each active site.

The enzyme catalyses N(6)-(1,2-dicarboxyethyl)-AMP = fumarate + AMP. The catalysed reaction is (2S)-2-[5-amino-1-(5-phospho-beta-D-ribosyl)imidazole-4-carboxamido]succinate = 5-amino-1-(5-phospho-beta-D-ribosyl)imidazole-4-carboxamide + fumarate. The protein operates within purine metabolism; AMP biosynthesis via de novo pathway; AMP from IMP: step 2/2. It participates in purine metabolism; IMP biosynthesis via de novo pathway; 5-amino-1-(5-phospho-D-ribosyl)imidazole-4-carboxamide from 5-amino-1-(5-phospho-D-ribosyl)imidazole-4-carboxylate: step 2/2. Functionally, catalyzes two reactions in de novo purine nucleotide biosynthesis. Catalyzes the breakdown of 5-aminoimidazole- (N-succinylocarboxamide) ribotide (SAICAR or 2-[5-amino-1-(5-phospho-beta-D-ribosyl)imidazole-4-carboxamido]succinate) to 5-aminoimidazole-4-carboxamide ribotide (AICAR or 5-amino-1-(5-phospho-beta-D-ribosyl)imidazole-4-carboxamide) and fumarate, and of adenylosuccinate (ADS or N(6)-(1,2-dicarboxyethyl)-AMP) to adenosine monophosphate (AMP) and fumarate. This Legionella pneumophila (strain Corby) protein is Adenylosuccinate lyase (purB).